The chain runs to 314 residues: Bis(5'-nucleosyl)-tetraphosphatase, symmetrical (314 aa).

The interval 267-314 is disordered; the sequence is QVPGNPITHPPKTAQRPRQPRRRQRQRGGDQAQTGPAPTPASTGPAGG. The segment covering 297–314 has biased composition (low complexity); sequence QAQTGPAPTPASTGPAGG.

It belongs to the Ap4A hydrolase family.

It carries out the reaction P(1),P(4)-bis(5'-adenosyl) tetraphosphate + H2O = 2 ADP + 2 H(+). Hydrolyzes diadenosine 5',5'''-P1,P4-tetraphosphate to yield ADP. The chain is Bis(5'-nucleosyl)-tetraphosphatase, symmetrical from Xanthomonas axonopodis pv. citri (strain 306).